Consider the following 263-residue polypeptide: Small ribosomal subunit protein eS4, Y isoform 1 (263 aa).

The 63-residue stretch at 42-104 (LPLIIFLRNR…TGEHFRLVYD (63 aa)) folds into the S4 RNA-binding domain.

The protein belongs to the eukaryotic ribosomal protein eS4 family.

The protein is Small ribosomal subunit protein eS4, Y isoform 1 (RPS4Y1) of Monodelphis domestica (Gray short-tailed opossum).